Reading from the N-terminus, the 160-residue chain is Phosphopantetheine adenylyltransferase (160 aa).

A substrate-binding site is contributed by Ser-9. ATP-binding positions include 9–10 (SF) and His-17. Lys-41, Leu-73, and Arg-87 together coordinate substrate. ATP is bound by residues 88–90 (GLR), Glu-98, and 123–129 (YTFLSSS).

The protein belongs to the bacterial CoaD family. As to quaternary structure, homohexamer. Requires Mg(2+) as cofactor.

It localises to the cytoplasm. The catalysed reaction is (R)-4'-phosphopantetheine + ATP + H(+) = 3'-dephospho-CoA + diphosphate. Its pathway is cofactor biosynthesis; coenzyme A biosynthesis; CoA from (R)-pantothenate: step 4/5. Its function is as follows. Reversibly transfers an adenylyl group from ATP to 4'-phosphopantetheine, yielding dephospho-CoA (dPCoA) and pyrophosphate. This Dictyoglomus turgidum (strain DSM 6724 / Z-1310) protein is Phosphopantetheine adenylyltransferase.